Reading from the N-terminus, the 440-residue chain is Xaa-Pro dipeptidase (440 aa).

Residues aspartate 244, aspartate 255, histidine 335, glutamate 380, and glutamate 419 each coordinate Mn(2+).

Belongs to the peptidase M24B family. Bacterial-type prolidase subfamily. Mn(2+) serves as cofactor.

It carries out the reaction Xaa-L-Pro dipeptide + H2O = an L-alpha-amino acid + L-proline. Splits dipeptides with a prolyl residue in the C-terminal position. The sequence is that of Xaa-Pro dipeptidase from Shewanella piezotolerans (strain WP3 / JCM 13877).